A 153-amino-acid chain; its full sequence is Ribosomal RNA large subunit methyltransferase H (153 aa).

Residues Leu70, Gly102, and 121–126 (LSRMTF) contribute to the S-adenosyl-L-methionine site.

The protein belongs to the RNA methyltransferase RlmH family. In terms of assembly, homodimer.

It is found in the cytoplasm. It carries out the reaction pseudouridine(1915) in 23S rRNA + S-adenosyl-L-methionine = N(3)-methylpseudouridine(1915) in 23S rRNA + S-adenosyl-L-homocysteine + H(+). In terms of biological role, specifically methylates the pseudouridine at position 1915 (m3Psi1915) in 23S rRNA. In Geobacter sulfurreducens (strain ATCC 51573 / DSM 12127 / PCA), this protein is Ribosomal RNA large subunit methyltransferase H.